The primary structure comprises 239 residues: Purine nucleoside phosphorylase DeoD-type (239 aa).

Histidine 5 is a binding site for a purine D-ribonucleoside. Phosphate-binding residues include glycine 21 and arginine 25. At lysine 27 the chain carries N6-acetyllysine. Phosphate is bound by residues arginine 44 and 88-91 (RVGS). A purine D-ribonucleoside-binding positions include 180–182 (EME) and 204–205 (SD). Aspartate 205 (proton donor) is an active-site residue.

This sequence belongs to the PNP/UDP phosphorylase family. In terms of assembly, homohexamer; trimer of homodimers.

The catalysed reaction is a purine D-ribonucleoside + phosphate = a purine nucleobase + alpha-D-ribose 1-phosphate. It catalyses the reaction a purine 2'-deoxy-D-ribonucleoside + phosphate = a purine nucleobase + 2-deoxy-alpha-D-ribose 1-phosphate. Catalyzes the reversible phosphorolytic breakdown of the N-glycosidic bond in the beta-(deoxy)ribonucleoside molecules, with the formation of the corresponding free purine bases and pentose-1-phosphate. The polypeptide is Purine nucleoside phosphorylase DeoD-type (Escherichia coli O81 (strain ED1a)).